The primary structure comprises 223 residues: Killer cell lectin-like receptor subfamily B member 1B allele A (223 aa).

Residues 1 to 45 are Cytoplasmic-facing; the sequence is MDTAVVYADLHLARTGEPKREPPPSLSPDTCQCPRWHRLALKLGC. The ITIM motif motif lies at 5–10; sequence VVYADL. The LCK-binding motif signature appears at 31 to 34; that stretch reads CQCP. The chain crosses the membrane as a helical; Signal-anchor for type II membrane protein span at residues 46-66; the sequence is ACLILLVLSVIGLGVLVLTLL. Residues 67–223 lie on the Extracellular side of the membrane; the sequence is QKPLIQNSPA…LKRESTCNDS (157 aa). Residues 101–211 form the C-type lectin domain; the sequence is HQDKCFHVSQ…CDSDNIWICQ (111 aa). 2 cysteine pairs are disulfide-bonded: Cys-122/Cys-210 and Cys-189/Cys-202.

As to quaternary structure, homodimer; disulfide-linked. Interacts with tyrosine kinase LCK. Binds PTPN6/SHP-1 in a phosphorylation-dependent manner. Expressed in a subset of natural killer cells.

The protein resides in the membrane. Its function is as follows. Receptor for CLEC2D/OCIL. Ligand-binding contributes to inhibition of cytotoxic natural killer (NK) cells. May mediate MHC class I-independent 'missing-self' recognition of allografts, tumor cells and virus-infected cells. The chain is Killer cell lectin-like receptor subfamily B member 1B allele A from Rattus norvegicus (Rat).